The sequence spans 197 residues: Xanthine phosphoribosyltransferase (197 aa).

L20 and N27 together coordinate xanthine. 128–132 (ANGQA) is a 5-phospho-alpha-D-ribose 1-diphosphate binding site. K156 contributes to the xanthine binding site.

It belongs to the purine/pyrimidine phosphoribosyltransferase family. Xpt subfamily. Homodimer.

The protein resides in the cytoplasm. The catalysed reaction is XMP + diphosphate = xanthine + 5-phospho-alpha-D-ribose 1-diphosphate. The protein operates within purine metabolism; XMP biosynthesis via salvage pathway; XMP from xanthine: step 1/1. In terms of biological role, converts the preformed base xanthine, a product of nucleic acid breakdown, to xanthosine 5'-monophosphate (XMP), so it can be reused for RNA or DNA synthesis. The protein is Xanthine phosphoribosyltransferase of Bacillus mycoides (strain KBAB4) (Bacillus weihenstephanensis).